The primary structure comprises 784 residues: Cadherin-5 (784 aa).

The first 25 residues, 1 to 25 (MQRLMMLLATSGACLGLLAVAAVAA), serve as a signal peptide directing secretion. A propeptide spanning residues 26-47 (AGANPAQRDTHSLLPTHRRQKR) is cleaved from the precursor. 5 Cadherin domains span residues 48 to 151 (DWIW…WPVF), 152 to 258 (THRL…FPFF), 259 to 372 (TQTK…PPIF), 373 to 477 (QQPF…DNAP), and 478 to 593 (EFAK…MAAQ). The Extracellular portion of the chain corresponds to 48–599 (DWIWNQMHID…MAAQVGVSIQ (552 aa)). Ca(2+) is bound by residues Glu58 and Glu59. The N-linked (GlcNAc...) (complex) asparagine glycan is linked to Asn61. Ca(2+) contacts are provided by Asp109 and Glu111. N-linked (GlcNAc...) (complex) asparagine glycosylation is present at Asn112. Ca(2+) contacts are provided by Asp143, Val144, Asn145, Asp146, and Asn147. An N-linked (GlcNAc...) asparagine glycan is attached at Asn157. 4 residues coordinate Ca(2+): Asp177, Asp179, His186, and Asp231. Asn362 carries an N-linked (GlcNAc...) asparagine glycan. A glycan (N-linked (GlcNAc...) (complex) asparagine) is linked at Asn442. N-linked (GlcNAc...) asparagine glycosylation is found at Asn523 and Asn535. The chain crosses the membrane as a helical span at residues 600-620 (AVVAILLCILTITVITLLIFL). Positions 621–660 (RRRLRKQARAHGKSVPEIHEQLVTYDEEGGGEMDTTSYDV) are required for interaction with PALS1. Residues 621–784 (RRRLRKQARA…GSDPREELLY (164 aa)) lie on the Cytoplasmic side of the membrane.

Part of a complex composed of AMOTL2, MAGI1 and CDH5, within the complex AMOTL2 acts as a scaffold protein for the interaction of MAGI1 with CDH5. The complex is required for coupling actin fibers to cell junctions in endothelial cells. Within the complex AMOTL2 (via its N-terminus) interacts with CDH5. Interacts (via cadherin 5 domain) with PTPRB. Interacts with TRPC4. Interacts with KRIT1. Interacts with PARD3. Interacts with RTN4 (isoform B). Interacts with PALS1; the interaction promotes PALS1 localization to cell junctions and is required for CDH5-mediated vascular lumen formation and endothelial cell. Interacts with CTNND1/p120-catenin; the interaction controls CADH5 endocytosis. In terms of processing, phosphorylated on tyrosine residues by KDR/VEGFR-2. Dephosphorylated by PTPRB. O-glycosylated. Expressed in endothelial cells (at protein level). Expressed in the brain.

The protein resides in the cell junction. It localises to the adherens junction. The protein localises to the cell membrane. Its subcellular location is the cytoplasm. In terms of biological role, cadherins are calcium-dependent cell adhesion proteins. They preferentially interact with themselves in a homophilic manner in connecting cells; cadherins may thus contribute to the sorting of heterogeneous cell types. This cadherin may play a important role in endothelial cell biology through control of the cohesion and organization of the intercellular junctions. It associates with alpha-catenin forming a link to the cytoskeleton. Plays a role in coupling actin fibers to cell junctions in endothelial cells, via acting as a cell junctional complex anchor for AMOTL2 and MAGI1. Acts in concert with KRIT1 and PALS1 to establish and maintain correct endothelial cell polarity and vascular lumen. These effects are mediated by recruitment and activation of the Par polarity complex and RAP1B. Required for activation of PRKCZ and for the localization of phosphorylated PRKCZ, PARD3, TIAM1 and RAP1B to the cell junction. Associates with CTNND1/p120-catenin to control CADH5 endocytosis. This chain is Cadherin-5, found in Homo sapiens (Human).